The chain runs to 692 residues: Elongation factor G (692 aa).

In terms of domain architecture, tr-type G spans 8–282 (ENTRNIGIMA…AVIDYLPSPL (275 aa)). Residues 17–24 (AHIDAGKT), 81–85 (DTPGH), and 135–138 (NKMD) each bind GTP.

It belongs to the TRAFAC class translation factor GTPase superfamily. Classic translation factor GTPase family. EF-G/EF-2 subfamily.

The protein localises to the cytoplasm. In terms of biological role, catalyzes the GTP-dependent ribosomal translocation step during translation elongation. During this step, the ribosome changes from the pre-translocational (PRE) to the post-translocational (POST) state as the newly formed A-site-bound peptidyl-tRNA and P-site-bound deacylated tRNA move to the P and E sites, respectively. Catalyzes the coordinated movement of the two tRNA molecules, the mRNA and conformational changes in the ribosome. The sequence is that of Elongation factor G from Bacillus cereus (strain ATCC 10987 / NRS 248).